Here is a 371-residue protein sequence, read N- to C-terminus: Aspartate-semialdehyde dehydrogenase (371 aa).

NADP(+)-binding positions include 9-12 (RGMV), 37-38 (TS), and Gln-73. Arg-102 lines the phosphate pocket. The active-site Acyl-thioester intermediate is the Cys-135. Gln-162 is a substrate binding site. NADP(+)-binding positions include 165–166 (SG) and Pro-193. Residue Glu-241 coordinates substrate. Position 244 (Lys-244) interacts with phosphate. Arg-268 contacts substrate. His-275 serves as the catalytic Proton acceptor. Gln-351 contributes to the NADP(+) binding site.

It belongs to the aspartate-semialdehyde dehydrogenase family. Homodimer.

It carries out the reaction L-aspartate 4-semialdehyde + phosphate + NADP(+) = 4-phospho-L-aspartate + NADPH + H(+). It participates in amino-acid biosynthesis; L-lysine biosynthesis via DAP pathway; (S)-tetrahydrodipicolinate from L-aspartate: step 2/4. It functions in the pathway amino-acid biosynthesis; L-methionine biosynthesis via de novo pathway; L-homoserine from L-aspartate: step 2/3. Its pathway is amino-acid biosynthesis; L-threonine biosynthesis; L-threonine from L-aspartate: step 2/5. Catalyzes the NADPH-dependent formation of L-aspartate-semialdehyde (L-ASA) by the reductive dephosphorylation of L-aspartyl-4-phosphate. The protein is Aspartate-semialdehyde dehydrogenase of Neisseria meningitidis serogroup B (strain ATCC BAA-335 / MC58).